A 252-amino-acid chain; its full sequence is Small ribosomal subunit protein uS2 (252 aa).

It belongs to the universal ribosomal protein uS2 family.

This Chlorobium phaeobacteroides (strain DSM 266 / SMG 266 / 2430) protein is Small ribosomal subunit protein uS2.